Here is a 67-residue protein sequence, read N- to C-terminus: MSLELLSKLETKIQAALETIELLKMELEEEKQTSSSLSEQNQQLQQELTSWNEKVTGLVGLLNEEVN.

The stretch at 3–59 (LELLSKLETKIQAALETIELLKMELEEEKQTSSSLSEQNQQLQQELTSWNEKVTGLV) forms a coiled coil.

Belongs to the ZapB family. Homodimer. The ends of the coiled-coil dimer bind to each other, forming polymers. Interacts with FtsZ.

The protein localises to the cytoplasm. In terms of biological role, non-essential, abundant cell division factor that is required for proper Z-ring formation. It is recruited early to the divisome by direct interaction with FtsZ, stimulating Z-ring assembly and thereby promoting cell division earlier in the cell cycle. Its recruitment to the Z-ring requires functional FtsA or ZipA. This chain is Cell division protein ZapB, found in Shewanella halifaxensis (strain HAW-EB4).